The primary structure comprises 280 residues: Golgi phosphoprotein 3-like (280 aa).

Residues 1 to 30 form a disordered region; it reads MTTLTRRGRRADVGQENRVDSEDYIKDKDE. Residues 10 to 30 are compositionally biased toward basic and acidic residues; sequence RADVGQENRVDSEDYIKDKDE. The a 1,2-diacyl-sn-glycero-3-phospho-(1D-myo-inositol 4-phosphate) site is built by W62, R71, R152, and R155. A beta-hairpin required for oligomerization region spans residues 171–182; that stretch reads EKQNFLLFDMTT.

The protein belongs to the GOLPH3/VPS74 family. As to quaternary structure, homooligomer.

The protein localises to the golgi apparatus. It localises to the golgi stack membrane. The protein resides in the trans-Golgi network membrane. Phosphatidylinositol-4-phosphate-binding protein that may play a role in the process of vesicle budding at the Golgi and anterograde transport to the plasma membrane. This chain is Golgi phosphoprotein 3-like (golph3l), found in Xenopus tropicalis (Western clawed frog).